A 550-amino-acid chain; its full sequence is MAAKDVVFGDSARAKMVEGVNILANAVKVTLGPKGRNVVLERSFGGPTVTKDGVSVAKEIELKDKLQNMGAQMVKEVASKTSDNAGDGTTTATVLAQSIVREGMKYVASGMNPMDLKRGIDKAVAAAVEELKKISKPCTTNKEIAQVGAISANSDSSIGDRIAEAMDKVGKEGVITVEDGKSLADELDVVEGMQFDRGYLSPYFINNPDKQVAVLENPFVLLHDKKVSNIRDLLPVLEQVAKAGRPLLIIAEDVEGEALATLVVNNIRGILKTVAVKAPGFGDRRKAMLEDIAILTGGQVIAEETGLTLEKATLAELGQAKRIEVGKENTTIIDGAGEAVNIEARVKQIRTQIEEATSDYDREKLQERVAKLAGGVAVIKVGAATEVEMKEKKARVEDALHATRAAVEEGIVPGGGVALIRARTAIASLTGVNADQNAGIKIVLRAMEEPLRQIVTNGGEEASVVVAAVAAGKGNYGYNAATGEYVDMVEAGVVDPTKVTRTALQNAASVAGLLLTTDAAVAELPKEDAPMPGGMPGGMGGMGMGMGMDM.

ATP is bound by residues 30–33, Lys-51, 87–91, Gly-415, 479–481, and Asp-495; these read TLGP, DGTTT, and NAA.

Belongs to the chaperonin (HSP60) family. As to quaternary structure, forms a cylinder of 14 subunits composed of two heptameric rings stacked back-to-back. Interacts with the co-chaperonin GroES.

The protein localises to the cytoplasm. The enzyme catalyses ATP + H2O + a folded polypeptide = ADP + phosphate + an unfolded polypeptide.. Its function is as follows. Together with its co-chaperonin GroES, plays an essential role in assisting protein folding. The GroEL-GroES system forms a nano-cage that allows encapsulation of the non-native substrate proteins and provides a physical environment optimized to promote and accelerate protein folding. The polypeptide is Chaperonin GroEL (Burkholderia mallei (strain NCTC 10247)).